The primary structure comprises 101 residues: Small ribosomal subunit protein uS14 (101 aa).

The protein belongs to the universal ribosomal protein uS14 family. As to quaternary structure, part of the 30S ribosomal subunit. Contacts proteins S3 and S10.

Binds 16S rRNA, required for the assembly of 30S particles and may also be responsible for determining the conformation of the 16S rRNA at the A site. The polypeptide is Small ribosomal subunit protein uS14 (Cupriavidus pinatubonensis (strain JMP 134 / LMG 1197) (Cupriavidus necator (strain JMP 134))).